The chain runs to 671 residues: tRNA 5-methylaminomethyl-2-thiouridine biosynthesis bifunctional protein MnmC (671 aa).

The tRNA (mnm(5)s(2)U34)-methyltransferase stretch occupies residues Met-1–Pro-245. An FAD-dependent cmnm(5)s(2)U34 oxidoreductase region spans residues Val-272–Glu-671.

The protein in the N-terminal section; belongs to the methyltransferase superfamily. tRNA (mnm(5)s(2)U34)-methyltransferase family. This sequence in the C-terminal section; belongs to the DAO family. It depends on FAD as a cofactor.

Its subcellular location is the cytoplasm. The catalysed reaction is 5-aminomethyl-2-thiouridine(34) in tRNA + S-adenosyl-L-methionine = 5-methylaminomethyl-2-thiouridine(34) in tRNA + S-adenosyl-L-homocysteine + H(+). Catalyzes the last two steps in the biosynthesis of 5-methylaminomethyl-2-thiouridine (mnm(5)s(2)U) at the wobble position (U34) in tRNA. Catalyzes the FAD-dependent demodification of cmnm(5)s(2)U34 to nm(5)s(2)U34, followed by the transfer of a methyl group from S-adenosyl-L-methionine to nm(5)s(2)U34, to form mnm(5)s(2)U34. This is tRNA 5-methylaminomethyl-2-thiouridine biosynthesis bifunctional protein MnmC from Actinobacillus pleuropneumoniae serotype 3 (strain JL03).